Here is a 298-residue protein sequence, read N- to C-terminus: Epimerase family protein SSP1921 (298 aa).

It belongs to the NAD(P)-dependent epimerase/dehydratase family. SDR39U1 subfamily.

The protein is Epimerase family protein SSP1921 of Staphylococcus saprophyticus subsp. saprophyticus (strain ATCC 15305 / DSM 20229 / NCIMB 8711 / NCTC 7292 / S-41).